The sequence spans 540 residues: Pentatricopeptide repeat-containing protein At1g14470 (540 aa).

PPR repeat units follow at residues 70-104 (NVFV…GIMP), 105-134 (DAFS…GFFK), 135-165 (DPYV…ISQR), 166-196 (KGSD…MPEN), 197-227 (DVVS…MPEK), 228-262 (SVVS…GVRP), 263-297 (NETT…RVRL), 298-328 (NCFV…LGTQ), 330-364 (NLVT…NVVS), 365-395 (WNSL…GDSK), 397-431 (DEVT…QIKL), 432-462 (NDSG…MKER), 463-497 (DVVS…GIEP), and 498-528 (DRVT…IRNP).

This sequence belongs to the PPR family. PCMP-A subfamily.

The sequence is that of Pentatricopeptide repeat-containing protein At1g14470 (PCMP-A4) from Arabidopsis thaliana (Mouse-ear cress).